A 381-amino-acid chain; its full sequence is Peptidoglycan glycosyltransferase MrdB (381 aa).

10 helical membrane-spanning segments follow: residues 11–31 (FDLLPFVFIIPLLVVSFLLIF), 40–60 (KQGVYYAIGFILFWIVFFIPF), 66–86 (WLFVFYWACVILLALVDFMGY), 99–119 (FISITLQPSEPVKIAILLLLA), 132–152 (YDWGMFLKLSFYICLPAALIL), 156–176 (DLGTALIVLIMGFGILLIVGL), 180–200 (VWLPLFIALLVASPIAYHFLH), 263–283 (FGFLGAMLLFAIYIGLSLHLF), 297–317 (IVALGISILIFVYSSVNIAMT), and 328–348 (LPLFSYGGSSFITFMILFGIL).

It belongs to the SEDS family. MrdB/RodA subfamily.

It localises to the cell inner membrane. The enzyme catalyses [GlcNAc-(1-&gt;4)-Mur2Ac(oyl-L-Ala-gamma-D-Glu-L-Lys-D-Ala-D-Ala)](n)-di-trans,octa-cis-undecaprenyl diphosphate + beta-D-GlcNAc-(1-&gt;4)-Mur2Ac(oyl-L-Ala-gamma-D-Glu-L-Lys-D-Ala-D-Ala)-di-trans,octa-cis-undecaprenyl diphosphate = [GlcNAc-(1-&gt;4)-Mur2Ac(oyl-L-Ala-gamma-D-Glu-L-Lys-D-Ala-D-Ala)](n+1)-di-trans,octa-cis-undecaprenyl diphosphate + di-trans,octa-cis-undecaprenyl diphosphate + H(+). It functions in the pathway cell wall biogenesis; peptidoglycan biosynthesis. Functionally, peptidoglycan polymerase that is essential for cell wall elongation. The chain is Peptidoglycan glycosyltransferase MrdB from Helicobacter pylori (strain ATCC 700392 / 26695) (Campylobacter pylori).